Here is a 197-residue protein sequence, read N- to C-terminus: ATP-dependent Clp protease proteolytic subunit 2 (197 aa).

Ser96 acts as the Nucleophile in catalysis. His121 is a catalytic residue.

The protein belongs to the peptidase S14 family. Fourteen ClpP subunits assemble into 2 heptameric rings which stack back to back to give a disk-like structure with a central cavity, resembling the structure of eukaryotic proteasomes.

It localises to the cytoplasm. It carries out the reaction Hydrolysis of proteins to small peptides in the presence of ATP and magnesium. alpha-casein is the usual test substrate. In the absence of ATP, only oligopeptides shorter than five residues are hydrolyzed (such as succinyl-Leu-Tyr-|-NHMec, and Leu-Tyr-Leu-|-Tyr-Trp, in which cleavage of the -Tyr-|-Leu- and -Tyr-|-Trp bonds also occurs).. In terms of biological role, cleaves peptides in various proteins in a process that requires ATP hydrolysis. Has a chymotrypsin-like activity. Plays a major role in the degradation of misfolded proteins. The protein is ATP-dependent Clp protease proteolytic subunit 2 of Parasynechococcus marenigrum (strain WH8102).